The following is a 185-amino-acid chain: CASP-like protein SELMODRAFT_413556 (185 aa).

At 1–89 (MATLPLSLIF…AVTVLFYLAK (89 aa)) the chain is on the cytoplasmic side. A helical transmembrane segment spans residues 90–110 (LVFGILGLALSIIWLLHIIVF). Residues 111 to 131 (MLVNPPAFPFLNQVFIQLDSA) lie on the Extracellular side of the membrane. A helical transmembrane segment spans residues 132 to 152 (WGLLGTTAFAIFCYYLIMSVI). Over 153–163 (SGEMHSIHPMK) the chain is Cytoplasmic. A helical membrane pass occupies residues 164–184 (YQGTLMNSFLFNVAIILLCST). Arg-185 is a topological domain (extracellular).

Belongs to the Casparian strip membrane proteins (CASP) family. Homodimer and heterodimers.

It is found in the cell membrane. The polypeptide is CASP-like protein SELMODRAFT_413556 (Selaginella moellendorffii (Spikemoss)).